The sequence spans 119 residues: Large ribosomal subunit protein bL20 (119 aa).

Belongs to the bacterial ribosomal protein bL20 family.

Functionally, binds directly to 23S ribosomal RNA and is necessary for the in vitro assembly process of the 50S ribosomal subunit. It is not involved in the protein synthesizing functions of that subunit. This chain is Large ribosomal subunit protein bL20, found in Caldanaerobacter subterraneus subsp. tengcongensis (strain DSM 15242 / JCM 11007 / NBRC 100824 / MB4) (Thermoanaerobacter tengcongensis).